A 365-amino-acid chain; its full sequence is tRNA-specific 2-thiouridylase MnmA (365 aa).

Residues 12 to 19 (AMSGGVDS) and Met38 contribute to the ATP site. The Nucleophile role is filled by Cys108. Cys108 and Cys206 are oxidised to a cystine. An ATP-binding site is contributed by Gly132. The tract at residues 156–158 (KDQ) is interaction with tRNA. Catalysis depends on Cys206, which acts as the Cysteine persulfide intermediate. Residues 312-313 (RY) are interaction with tRNA.

It belongs to the MnmA/TRMU family.

Its subcellular location is the cytoplasm. The catalysed reaction is S-sulfanyl-L-cysteinyl-[protein] + uridine(34) in tRNA + AH2 + ATP = 2-thiouridine(34) in tRNA + L-cysteinyl-[protein] + A + AMP + diphosphate + H(+). Catalyzes the 2-thiolation of uridine at the wobble position (U34) of tRNA, leading to the formation of s(2)U34. This is tRNA-specific 2-thiouridylase MnmA from Carboxydothermus hydrogenoformans (strain ATCC BAA-161 / DSM 6008 / Z-2901).